Here is a 184-residue protein sequence, read N- to C-terminus: ATP-dependent protease subunit HslV (184 aa).

T2 is a catalytic residue. Na(+) is bound by residues G157, C160, and T163.

This sequence belongs to the peptidase T1B family. HslV subfamily. A double ring-shaped homohexamer of HslV is capped on each side by a ring-shaped HslU homohexamer. The assembly of the HslU/HslV complex is dependent on binding of ATP.

It localises to the cytoplasm. The enzyme catalyses ATP-dependent cleavage of peptide bonds with broad specificity.. With respect to regulation, allosterically activated by HslU binding. Its function is as follows. Protease subunit of a proteasome-like degradation complex believed to be a general protein degrading machinery. The polypeptide is ATP-dependent protease subunit HslV (Vibrio vulnificus (strain CMCP6)).